A 1702-amino-acid polypeptide reads, in one-letter code: Immunoglobulin A1 protease autotransporter (1702 aa).

The signal sequence occupies residues 1–25 (MLNKKFKLNFIALTVAYALTPYTEA). One can recognise a Peptidase S6 domain in the interval 26-332 (ALVRDDVDYQ…NIYKPEFAKT (307 aa)). Serine 288 is a catalytic residue. A disordered region spans residues 991-1411 (VEKRNQTVDT…GSDRSTVALR (421 aa)). A compositionally biased stretch (polar residues) spans 997 to 1021 (TVDTTNITTPNNIQADVPSVPSNNE). Residues 1037–1047 (TPSETTETVAE) show a composition bias toward low complexity. The span at 1049-1061 (SKQESKTVEKNEQ) shows a compositional bias: basic and acidic residues. The span at 1082-1095 (KANTQTNEVAQSGS) shows a compositional bias: polar residues. 2 stretches are compositionally biased toward basic and acidic residues: residues 1104–1132 (EIKE…KDEI) and 1150–1162 (APKE…KVEE). 2 consecutive repeat copies span residues 1109–1116 (AKVEKEEK) and 1117–1124 (AKVEKEEK). Positions 1109–1124 (AKVEKEEKAKVEKEEK) are 2 X 8 AA tandem repeats of A-K-V-E-K-E-E-K. 2 stretches are compositionally biased toward polar residues: residues 1163 to 1186 (TQVQ…SPNS) and 1207 to 1218 (VSKNQTENTTDQ). Residues 1219 to 1234 (PTEREKTAKVETEKTQ) are compositionally biased toward basic and acidic residues. Polar residues-rich tracts occupy residues 1235 to 1255 (EPPQ…TVQP), 1263 to 1305 (NVPT…TAIT), and 1316 to 1341 (TETA…VANN). Positions 1360-1378 (ETSAEETTAASTDETTIAD) are enriched in low complexity. Positions 1382 to 1392 (RSKPNRRSRRS) are enriched in basic residues. One can recognise an Autotransporter domain in the interval 1450 to 1702 (NNEGQYNVWV…TAELKLSFSF (253 aa)).

It is found in the periplasm. The protein localises to the secreted. It localises to the cell surface. The protein resides in the cell outer membrane. The catalysed reaction is Cleavage of immunoglobulin A molecules at certain Pro-|-Xaa bonds in the hinge region. No small molecule substrates are known.. Its function is as follows. Virulence factor; cleaves host immunoglobulin A producing intact Fc and Fab fragments. The protein is Immunoglobulin A1 protease autotransporter (iga) of Haemophilus influenzae.